A 240-amino-acid polypeptide reads, in one-letter code: Ubiquinone biosynthesis O-methyltransferase (240 aa).

Arg-44, Gly-64, Asp-85, and Met-129 together coordinate S-adenosyl-L-methionine.

It belongs to the methyltransferase superfamily. UbiG/COQ3 family.

The catalysed reaction is a 3-demethylubiquinol + S-adenosyl-L-methionine = a ubiquinol + S-adenosyl-L-homocysteine + H(+). It catalyses the reaction a 3-(all-trans-polyprenyl)benzene-1,2-diol + S-adenosyl-L-methionine = a 2-methoxy-6-(all-trans-polyprenyl)phenol + S-adenosyl-L-homocysteine + H(+). It participates in cofactor biosynthesis; ubiquinone biosynthesis. O-methyltransferase that catalyzes the 2 O-methylation steps in the ubiquinone biosynthetic pathway. In Escherichia coli O6:H1 (strain CFT073 / ATCC 700928 / UPEC), this protein is Ubiquinone biosynthesis O-methyltransferase.